The following is a 142-amino-acid chain: Putative transcriptional regulatory protein PF0535 (142 aa).

Belongs to the Tfx family.

Its function is as follows. Putative transcriptional regulator. In Pyrococcus furiosus (strain ATCC 43587 / DSM 3638 / JCM 8422 / Vc1), this protein is Putative transcriptional regulatory protein PF0535.